The chain runs to 523 residues: Effector protein hopAB1 (523 aa).

3 disordered regions span residues 1–94 (MPGI…EAQQ), 165–223 (VRQQ…QGLD), and 299–320 (RQTTTNSPELPPLASSAESGRR). Positions 18 to 31 (TDGEPVTEREHDSS) are enriched in basic and acidic residues. The span at 181-194 (SSSGSSQRSLIGRS) shows a compositional bias: low complexity.

The protein belongs to the HopAB family.

Its subcellular location is the secreted. Effector protein that plays different roles depending on the species and plant cultivars that interact with the pathogen. Acts as a virulence determinant by enhancing the development of disease symptoms and bacterial growth. Acts as an avirulence factor by eliciting hypersensitive response (HR) and plant resistance. This is Effector protein hopAB1 (hopAB1) from Pseudomonas savastanoi pv. glycinea (Pseudomonas syringae pv. glycinea).